We begin with the raw amino-acid sequence, 1243 residues long: Tau-tubulin kinase 2 (1243 aa).

The Protein kinase domain maps to 21 to 284; that stretch reads WKVLRKIGGG…LLTSVFDNSI (264 aa). ATP is bound by residues 27 to 35 and Lys50; that span reads IGGGGFGEI. Asp141 functions as the Proton acceptor in the catalytic mechanism. Ser445 carries the post-translational modification Phosphoserine. Positions 674–683 are enriched in polar residues; it reads VASTQSTSGS. 2 disordered regions span residues 674-695 and 737-761; these read VASTQSTSGSFHYGPQPEKKDL and TGHDMLPNMRDGDTSQDLGPKDPPD. Ser786 is modified (phosphoserine). The interval 1063 to 1086 is disordered; it reads QINGSASPQFLPRPPPGKPPVRPG. Residues 1073-1084 are compositionally biased toward pro residues; it reads LPRPPPGKPPVR. The residue at position 1102 (Ser1102) is a Phosphoserine. Residues 1115–1129 show a composition bias toward polar residues; it reads QNGSQKSRSTTQCKS. A disordered region spans residues 1115–1243; it reads QNGSQKSRST…KSKPASKLSR (129 aa). 3 stretches are compositionally biased toward low complexity: residues 1144–1170, 1187–1202, and 1227–1243; these read VVPRRSPSASPRSSSLPRTSSSSPSRA, SKSPPSHSGSSSSRRS, and SSKTPPGKSKPASKLSR.

The protein belongs to the protein kinase superfamily. CK1 Ser/Thr protein kinase family. Interacts with CEP164. Interacts with MCRS1; the interaction is required for recruitment of TTBK2 to the mother centriole.

Its subcellular location is the cell projection. The protein resides in the cilium. It is found in the cytoplasm. It localises to the cytoskeleton. The protein localises to the cilium basal body. Its subcellular location is the microtubule organizing center. The protein resides in the centrosome. It is found in the centriole. It localises to the cytosol. The protein localises to the nucleus. It carries out the reaction L-seryl-[protein] + ATP = O-phospho-L-seryl-[protein] + ADP + H(+). It catalyses the reaction L-threonyl-[protein] + ATP = O-phospho-L-threonyl-[protein] + ADP + H(+). Its function is as follows. Serine/threonine kinase that acts as a key regulator of ciliogenesis: controls the initiation of ciliogenesis by binding to the distal end of the basal body and promoting the removal of CCP110, which caps the mother centriole, leading to the recruitment of IFT proteins, which build the ciliary axoneme. Has some substrate preference for proteins that are already phosphorylated on a Tyr residue at the +2 position relative to the phosphorylation site. Able to phosphorylate tau on serines in vitro. Phosphorylates MPHOSPH9 which promotes its ubiquitination and proteasomal degradation, loss of MPHOSPH9 facilitates the removal of the CP110-CEP97 complex (a negative regulator of ciliogenesis) from the mother centrioles, promoting the initiation of ciliogenesis. Required for recruitment of CPLANE2 and INTU to the mother centriole. The chain is Tau-tubulin kinase 2 (Ttbk2) from Mus musculus (Mouse).